We begin with the raw amino-acid sequence, 2003 residues long: MQPPSLLLLLLLLLLLCVSVVRPRGLLCGSFPEPCANGGTCLSLSLGQGTCQCAPGFLGETCQFPDPCQNAQLCQNGGSCQALLPAPLGLPSSPSPLTPSFLCTCLPGFTGERCQAKLEDPCPPSFCSKRGRCHIQASGRPQCSCMPGWTGEQCQLRDFCSANPCVNGGVCLATYPQIQCHCPPGFEGHACERDVNECFQDPGPCPKGTSCHNTLGSFQCLCPVGQEGPRCELRAGPCPPRGCSNGGTCQLMPEKDSTFHLCLCPPGFIGPDCEVNPDNCVSHQCQNGGTCQDGLDTYTCLCPETWTGWDCSEDVDECETQGPPHCRNGGTCQNSAGSFHCVCVSGWGGTSCEENLDDCIAATCAPGSTCIDRVGSFSCLCPPGRTGLLCHLEDMCLSQPCHGDAQCSTNPLTGSTLCLCQPGYSGPTCHQDLDECLMAQQGPSPCEHGGSCLNTPGSFNCLCPPGYTGSRCEADHNECLSQPCHPGSTCLDLLATFHCLCPPGLEGQLCEVETNECASAPCLNHADCHDLLNGFQCICLPGFSGTRCEEDIDECRSSPCANGGQCQDQPGAFHCKCLPGFEGPRCQTEVDECLSDPCPVGASCLDLPGAFFCLCPSGFTGQLCEVPLCAPNLCQPKQICKDQKDKANCLCPDGSPGCAPPEDNCTCHHGHCQRSSCVCDVGWTGPECEAELGGCISAPCAHGGTCYPQPSGYNCTCPTGYTGPTCSEEMTACHSGPCLNGGSCNPSPGGYYCTCPPSHTGPQCQTSTDYCVSAPCFNGGTCVNRPGTFSCLCAMGFQGPRCEGKLRPSCADSPCRNRATCQDSPQGPRCLCPTGYTGGSCQTLMDLCAQKPCPRNSHCLQTGPSFHCLCLQGWTGPLCNLPLSSCQKAALSQGIDVSSLCHNGGLCVDSGPSYFCHCPPGFQGSLCQDHVNPCESRPCQNGATCMAQPSGYLCQCAPGYDGQNCSKELDACQSQPCHNHGTCTPKPGGFHCACPPGFVGLRCEGDVDECLDQPCHPTGTAACHSLANAFYCQCLPGHTGQWCEVEIDPCHSQPCFHGGTCEATAGSPLGFICHCPKGFEGPTCSHRAPSCGFHHCHHGGLCLPSPKPGFPPRCACLSGYGGPDCLTPPAPKGCGPPSPCLYNGSCSETTGLGGPGFRCSCPHSSPGPRCQKPGAKGCEGRSGDGACDAGCSGPGGNWDGGDCSLGVPDPWKGCPSHSRCWLLFRDGQCHPQCDSEECLFDGYDCETPPACTPAYDQYCHDHFHNGHCEKGCNTAECGWDGGDCRPEDGDPEWGPSLALLVVLSPPALDQQLFALARVLSLTLRVGLWVRKDRDGRDMVYPYPGARAEEKLGGTRDPTYQERAAPQTQPLGKETDSLSAGFVVVMGVDLSRCGPDHPASRCPWDPGLLLRFLAAMAAVGALEPLLPGPLLAVHPHAGTAPPANQLPWPVLCSPVAGVILLALGALLVLQLIRRRRREHGALWLPPGFTRRPRTQSAPHRRRPPLGEDSIGLKALKPKAEVDEDGVVMCSGPEEGEEVGQAEETGPPSTCQLWSLSGGCGALPQAAMLTPPQESEMEAPDLDTRGPDGVTPLMSAVCCGEVQSGTFQGAWLGCPEPWEPLLDGGACPQAHTVGTGETPLHLAARFSRPTAARRLLEAGANPNQPDRAGRTPLHAAVAADAREVCQLLLRSRQTAVDARTEDGTTPLMLAARLAVEDLVEELIAAQADVGARDKWGKTALHWAAAVNNARAARSLLQAGADKDAQDNREQTPLFLAAREGAVEVAQLLLGLGAARELRDQAGLAPADVAHQRNHWDLLTLLEGAGPPEARHKATPGREAGPFPRARTVSVSVPPHGGGALPRCRTLSAGAGPRGGGACLQARTWSVDLAARGGGAYSHCRSLSGVGAGGGPTPRGRRFSAGMRGPRPNPAIMRGRYGVAAGRGGRVSTDDWPCDWVALGACGSASNIPIPPPCLTPSPERGSPQLDCGPPALQEMPINQGGEGKK.

The N-terminal stretch at 1 to 23 (MQPPSLLLLLLLLLLLCVSVVRP) is a signal peptide. 4 EGF-like domains span residues 24-63 (RGLL…ETCQ), 64-115 (FPDP…ERCQ), 118-155 (LEDP…EQCQ), and 156-192 (LRDF…HACE). The Extracellular segment spans residues 24–1447 (RGLLCGSFPE…TAPPANQLPW (1424 aa)). Disulfide bonds link C28/C41, C35/C51, C53/C62, C68/C80, C74/C103, C105/C114, C122/C133, C127/C143, C145/C154, C160/C171, C165/C180, C182/C191, C198/C211, C205/C220, C222/C231, C238/C249, C243/C262, C264/C273, C280/C291, C285/C300, C302/C311, C318/C332, C326/C341, C343/C352, C359/C370, C364/C379, C381/C390, C396/C407, C401/C418, C420/C429, C436/C452, C446/C461, C463/C472, C479/C490, C484/C499, C501/C510, C517/C528, C522/C537, C539/C548, C555/C566, C560/C575, C577/C586, C593/C604, C598/C613, C615/C624, C629/C640, C634/C649, and C651/C658. An EGF-like 5; calcium-binding domain is found at 194–232 (DVNECFQDPGPCPKGTSCHNTLGSFQCLCPVGQEGPRCE). The region spanning 234–274 (RAGPCPPRGCSNGGTCQLMPEKDSTFHLCLCPPGFIGPDCE) is the EGF-like 6 domain. The 37-residue stretch at 276–312 (NPDNCVSHQCQNGGTCQDGLDTYTCLCPETWTGWDCS) folds into the EGF-like 7; calcium-binding domain. Positions 314–353 (DVDECETQGPPHCRNGGTCQNSAGSFHCVCVSGWGGTSCE) constitute an EGF-like 8; calcium-binding domain. Residues 355–391 (NLDDCIAATCAPGSTCIDRVGSFSCLCPPGRTGLLCH) enclose the EGF-like 9; calcium-binding domain. The EGF-like 10 domain occupies 392 to 430 (LEDMCLSQPCHGDAQCSTNPLTGSTLCLCQPGYSGPTCH). One can recognise an EGF-like 11; calcium-binding domain in the interval 432 to 473 (DLDECLMAQQGPSPCEHGGSCLNTPGSFNCLCPPGYTGSRCE). Residues 475-511 (DHNECLSQPCHPGSTCLDLLATFHCLCPPGLEGQLCE) form the EGF-like 12; calcium-binding domain. In terms of domain architecture, EGF-like 13; calcium-binding spans 513-549 (ETNECASAPCLNHADCHDLLNGFQCICLPGFSGTRCE). Residues 551–587 (DIDECRSSPCANGGQCQDQPGAFHCKCLPGFEGPRCQ) form the EGF-like 14; calcium-binding domain. Positions 589–625 (EVDECLSDPCPVGASCLDLPGAFFCLCPSGFTGQLCE) constitute an EGF-like 15; calcium-binding domain. EGF-like domains lie at 626–659 (VPLC…PGCA), 661–689 (PEDN…PECE), 691–727 (ELGG…PTCS), 729–765 (EMTA…PQCQ), 767–803 (STDY…PRCE), 806–842 (LRPS…GSCQ), 844–880 (LMDL…PLCN), 882–928 (PLSS…SLCQ), 930–966 (HVNP…QNCS), 968–1004 (ELDA…LRCE), 1006–1044 (DVDE…QWCE), 1046–1085 (EIDP…PTCS), 1087–1126 (RAPS…PDCL), and 1130–1171 (APKG…PRCQ). N-linked (GlcNAc...) asparagine glycosylation occurs at N664. Disulfide bonds link C665–C672, C667–C677, C679–C688, C695–C706, C700–C715, C717–C726, C733–C744, C738–C753, C755–C764, C771–C782, C776–C791, C793–C802, C810–C821, C815–C830, C832–C841, C848–C859, C853–C868, C870–C879, C886–C907, C901–C916, C918–C927, C934–C945, C939–C954, C956–C965, C972–C983, C977–C992, C994–C1003, C1010–C1023, C1015–C1032, C1034–C1043, C1050–C1061, C1055–C1073, C1075–C1084, C1091–C1102, C1096–C1114, C1116–C1125, C1134–C1146, C1140–C1159, C1161–C1170, C1178–C1191, C1187–C1203, C1214–C1238, C1220–C1233, C1229–C1245, C1251–C1277, C1259–C1272, and C1268–C1284. N714 is a glycosylation site (N-linked (GlcNAc...) asparagine). Residue N964 is glycosylated (N-linked (GlcNAc...) asparagine). A glycan (N-linked (GlcNAc...) asparagine) is linked at N1143. LNR repeat units follow at residues 1170-1213 (CQKP…PWKG), 1214-1250 (CPSH…TPPA), and 1251-1294 (CTPA…PEWG). Positions 1347–1371 (AEEKLGGTRDPTYQERAAPQTQPLG) are disordered. Residues 1448–1468 (PVLCSPVAGVILLALGALLVL) traverse the membrane as a helical segment. Residues 1469 to 2003 (QLIRRRRREH…PINQGGEGKK (535 aa)) lie on the Cytoplasmic side of the membrane. Residues 1485-1508 (PGFTRRPRTQSAPHRRRPPLGEDS) form a disordered region. Basic residues predominate over residues 1489 to 1502 (RRPRTQSAPHRRRP). 5 ANK repeats span residues 1633–1665 (TGET…QPDR), 1666–1698 (AGRT…DART), 1700–1732 (DGTT…ARDK), 1733–1765 (WGKT…AQDN), and 1766–1798 (REQT…LRDQ). 2 disordered regions span residues 1900–1927 (LSGV…RPNP) and 1968–2003 (PPPC…EGKK).

The protein belongs to the NOTCH family. Heterodimer of a C-terminal fragment N(TM) and a N-terminal fragment N(EC) which are probably linked by disulfide bonds. Interacts with MAML1, MAML2 and MAML3 which act as transcriptional coactivators for NOTCH4. In terms of assembly, (Microbial infection) Interacts with Epstein-Barr virus (EBV) RK-BARF0. Synthesized in the endoplasmic reticulum as an inactive form which is proteolytically cleaved by a furin-like convertase in the trans-Golgi network before it reaches the plasma membrane to yield an active, ligand-accessible form. Cleavage results in a C-terminal fragment N(TM) and a N-terminal fragment N(EC). Following ligand binding, it is cleaved by TNF-alpha converting enzyme (TACE) to yield a membrane-associated intermediate fragment called notch extracellular truncation (NEXT). This fragment is then cleaved by presenilin dependent gamma-secretase to release a notch-derived peptide containing the intracellular domain (NICD) from the membrane. In terms of processing, phosphorylated. Highly expressed in the heart, moderately in the lung and placenta and at low levels in the liver, skeletal muscle, kidney, pancreas, spleen, lymph node, thymus, bone marrow and fetal liver. No expression was seen in adult brain or peripheral blood leukocytes.

The protein localises to the cell membrane. It localises to the nucleus. In terms of biological role, functions as a receptor for membrane-bound ligands Jagged1, Jagged2 and Delta1 to regulate cell-fate determination. Upon ligand activation through the released notch intracellular domain (NICD) it forms a transcriptional activator complex with RBPJ/RBPSUH and activates genes of the enhancer of split locus. Affects the implementation of differentiation, proliferation and apoptotic programs. May regulate branching morphogenesis in the developing vascular system. The polypeptide is Neurogenic locus notch homolog protein 4 (Homo sapiens (Human)).